The following is a 113-amino-acid chain: Cell division protein FtsB (113 aa).

At 1–3 (MRL) the chain is on the cytoplasmic side. Residues 4–21 (ISLLLFVLLLAIQYPLWL) form a helical membrane-spanning segment. Residues 22 to 113 (GKGGWLRVWD…PNSVAGRGGH (92 aa)) lie on the Periplasmic side of the membrane. Residues 34–64 (RQVNEQTVHNQALKLRNAKLEGEVKDLQDGT) adopt a coiled-coil conformation. The disordered stretch occupies residues 93 to 113 (KVSATPPLPPPPNSVAGRGGH).

The protein belongs to the FtsB family. Part of a complex composed of FtsB, FtsL and FtsQ.

It localises to the cell inner membrane. In terms of biological role, essential cell division protein. May link together the upstream cell division proteins, which are predominantly cytoplasmic, with the downstream cell division proteins, which are predominantly periplasmic. This is Cell division protein FtsB from Cupriavidus metallidurans (strain ATCC 43123 / DSM 2839 / NBRC 102507 / CH34) (Ralstonia metallidurans).